Consider the following 41-residue polypeptide: Photosystem II reaction center protein J (41 aa).

Residues 9–29 (IPLWFVGMVGGLAALGLLAIF) traverse the membrane as a helical segment.

Belongs to the PsbJ family. In terms of assembly, PSII is composed of 1 copy each of membrane proteins PsbA, PsbB, PsbC, PsbD, PsbE, PsbF, PsbH, PsbI, PsbJ, PsbK, PsbL, PsbM, PsbT, PsbX, PsbY, PsbZ, Psb30/Ycf12, at least 3 peripheral proteins of the oxygen-evolving complex and a large number of cofactors. It forms dimeric complexes.

Its subcellular location is the plastid. It localises to the chloroplast thylakoid membrane. Its function is as follows. One of the components of the core complex of photosystem II (PSII). PSII is a light-driven water:plastoquinone oxidoreductase that uses light energy to abstract electrons from H(2)O, generating O(2) and a proton gradient subsequently used for ATP formation. It consists of a core antenna complex that captures photons, and an electron transfer chain that converts photonic excitation into a charge separation. This is Photosystem II reaction center protein J from Ostreococcus tauri.